A 382-amino-acid chain; its full sequence is Threonine synthase (382 aa).

An N6-(pyridoxal phosphate)lysine modification is found at Lys93. Residues Asn119, 219–223 (GNAGN), and Thr347 contribute to the pyridoxal 5'-phosphate site.

It belongs to the threonine synthase family. It depends on pyridoxal 5'-phosphate as a cofactor.

It carries out the reaction O-phospho-L-homoserine + H2O = L-threonine + phosphate. The protein operates within amino-acid biosynthesis; L-threonine biosynthesis; L-threonine from L-aspartate: step 5/5. Functionally, catalyzes the gamma-elimination of phosphate from L-phosphohomoserine and the beta-addition of water to produce L-threonine. The chain is Threonine synthase (thrC) from Synechocystis sp. (strain ATCC 27184 / PCC 6803 / Kazusa).